The following is a 470-amino-acid chain: Putative multidrug resistance protein MdtD (470 aa).

The Periplasmic portion of the chain corresponds to 1-11 (MTELPDNTRWQ). Residues 12 to 32 (LWIVALGFFMQSLDTTIVNTA) traverse the membrane as a helical segment. Residues 33-48 (LPSMAKSLGESPLHMH) lie on the Cytoplasmic side of the membrane. The helical transmembrane segment at 49–69 (MVVVSYVLTVAVMLPASGWLA) threads the bilayer. At 70–76 (DKIGVRN) the chain is on the periplasmic side. The chain crosses the membrane as a helical span at residues 77–97 (IFFAAIVLFTLGSLFCALSGT). The Cytoplasmic portion of the chain corresponds to 98–101 (LNQL). A helical transmembrane segment spans residues 102 to 124 (VLARVLQGVGGAMMVPVGRLTVM). Residues 125–137 (KIVPRAQYMAAMT) lie on the Periplasmic side of the membrane. A helical membrane pass occupies residues 138–158 (FVTLPGQIGPLLGPALGGVLV). At 159–164 (EYASWH) the chain is on the cytoplasmic side. Residues 165–185 (WIFLINIPVGIVGAMATFMLM) form a helical membrane-spanning segment. Residues 186–196 (PNYTIETRRFD) lie on the Periplasmic side of the membrane. Residues 197-217 (LPGFLLLAIGMAVLTLALDGS) form a helical membrane-spanning segment. The Cytoplasmic segment spans residues 218–221 (KSMG). The helical transmembrane segment at 222 to 242 (ISPWTLAGLAAGGAAAILLYL) threads the bilayer. Residues 243–262 (LHAKKNSGALFSLRLFCTPT) are Periplasmic-facing. A helical membrane pass occupies residues 263–283 (FSLGLLGSFAGRIGSGMLPFM). Topologically, residues 284–285 (TP) are cytoplasmic. The chain crosses the membrane as a helical span at residues 286–306 (VFLQIGLGFSPFHAGLMMIPM). Topologically, residues 307–341 (VLGSMGMKRIVVQIVNRFGYRRVLVATTLGLALVS) are periplasmic. Residues 342–362 (LLFMSVALLGWYYLLPLVLLL) traverse the membrane as a helical segment. Over 363-395 (QGMVNSARFSSMNTLTLKDLPDTLASSGNSLLS) the chain is Cytoplasmic. A helical transmembrane segment spans residues 396–416 (MIMQLSMSIGVTIAGMLLGMF). Residues 417 to 430 (GQQHIGIDSSATHH) are Periplasmic-facing. A helical transmembrane segment spans residues 431–451 (VFMYTWLCMAVIIALPAIIFA). The Cytoplasmic segment spans residues 452–470 (RVPNDTQQNMVISRRKRSL).

The protein belongs to the major facilitator superfamily. TCR/Tet family.

It is found in the cell inner membrane. This Salmonella paratyphi B (strain ATCC BAA-1250 / SPB7) protein is Putative multidrug resistance protein MdtD.